The primary structure comprises 257 residues: Type III pantothenate kinase (257 aa).

An ATP-binding site is contributed by 6 to 13; it reads DVGNTNTV. Residues Tyr100 and 107-110 contribute to the substrate site; that span reads GADR. Asp109 (proton acceptor) is an active-site residue. A K(+)-binding site is contributed by Asp129. Thr132 is an ATP binding site. Position 185 (Thr185) interacts with substrate.

Belongs to the type III pantothenate kinase family. In terms of assembly, homodimer. Requires NH4(+) as cofactor. K(+) serves as cofactor.

Its subcellular location is the cytoplasm. The enzyme catalyses (R)-pantothenate + ATP = (R)-4'-phosphopantothenate + ADP + H(+). The protein operates within cofactor biosynthesis; coenzyme A biosynthesis; CoA from (R)-pantothenate: step 1/5. Catalyzes the phosphorylation of pantothenate (Pan), the first step in CoA biosynthesis. The sequence is that of Type III pantothenate kinase from Desulfatibacillum aliphaticivorans.